We begin with the raw amino-acid sequence, 293 residues long: MAAITASMVAELRAKTDAPMMECKKALTEADGDMAKAEELLRVKLGNKASKAASRVTAEGVVASFVGGNAGALVELNCETDFVAKNDDFNAFAKQVAELVATKNPVDVAALSALPLDGKTVDEVRLALVGKIGENISIRRFVRFETANKLATYLHGSRIGVMVEYTGADEQVGKDVAMHVAAMKPVSLSADEVPADLIEKERRVAEQKAAESGKPAEIVAKMVDGSVQKFLKEVSLLNQPFVKNDKQTIEQMLKAANAAVQKFALFVVGEGIEKRQDDFAAEVAAQVAAAKQQ.

Positions 80 to 83 (TDFV) are involved in Mg(2+) ion dislocation from EF-Tu.

The protein belongs to the EF-Ts family.

Its subcellular location is the cytoplasm. Functionally, associates with the EF-Tu.GDP complex and induces the exchange of GDP to GTP. It remains bound to the aminoacyl-tRNA.EF-Tu.GTP complex up to the GTP hydrolysis stage on the ribosome. This chain is Elongation factor Ts, found in Burkholderia multivorans (strain ATCC 17616 / 249).